The chain runs to 341 residues: ATP-dependent 6-phosphofructokinase 2 (341 aa).

ATP is bound by residues glycine 10, 72–73, and 102–105; these read RL and GEGT. Glutamate 103 contributes to the Mg(2+) binding site. Substrate is bound by residues 125–127, arginine 162, 169–171, glutamate 222, lysine 266, and 272–275; these read TID, MGR, and HVQR. Aspartate 127 serves as the catalytic Proton acceptor.

It belongs to the phosphofructokinase type A (PFKA) family. Mixed-substrate PFK group III subfamily. In terms of assembly, homodimer or homotetramer. Requires Mg(2+) as cofactor.

It is found in the cytoplasm. The enzyme catalyses beta-D-fructose 6-phosphate + ATP = beta-D-fructose 1,6-bisphosphate + ADP + H(+). It participates in carbohydrate degradation; glycolysis; D-glyceraldehyde 3-phosphate and glycerone phosphate from D-glucose: step 3/4. With respect to regulation, allosterically inhibited by phosphoenolpyruvate. In terms of biological role, catalyzes the phosphorylation of D-fructose 6-phosphate to fructose 1,6-bisphosphate by ATP, the first committing step of glycolysis. This Streptomyces coelicolor (strain ATCC BAA-471 / A3(2) / M145) protein is ATP-dependent 6-phosphofructokinase 2.